We begin with the raw amino-acid sequence, 585 residues long: Formate--tetrahydrofolate ligase (585 aa).

Residue 65-72 (TPHGEGKT) participates in ATP binding.

The protein belongs to the formate--tetrahydrofolate ligase family.

It carries out the reaction (6S)-5,6,7,8-tetrahydrofolate + formate + ATP = (6R)-10-formyltetrahydrofolate + ADP + phosphate. It functions in the pathway one-carbon metabolism; tetrahydrofolate interconversion. This chain is Formate--tetrahydrofolate ligase, found in Shewanella baltica (strain OS195).